Here is a 449-residue protein sequence, read N- to C-terminus: Tubulin beta-5 chain (449 aa).

GTP contacts are provided by glutamine 11, glutamate 70, serine 139, glycine 143, threonine 144, glycine 145, asparagine 205, and asparagine 227. Residue glutamate 70 participates in Mg(2+) binding. A disordered region spans residues 427–449; that stretch reads QDATADEEGEYDVEEEEEGDYET. Residues 430–449 show a composition bias toward acidic residues; that stretch reads TADEEGEYDVEEEEEGDYET.

It belongs to the tubulin family. In terms of assembly, dimer of alpha and beta chains. A typical microtubule is a hollow water-filled tube with an outer diameter of 25 nm and an inner diameter of 15 nM. Alpha-beta heterodimers associate head-to-tail to form protofilaments running lengthwise along the microtubule wall with the beta-tubulin subunit facing the microtubule plus end conferring a structural polarity. Microtubules usually have 13 protofilaments but different protofilament numbers can be found in some organisms and specialized cells. The cofactor is Mg(2+).

It localises to the cytoplasm. It is found in the cytoskeleton. Its function is as follows. Tubulin is the major constituent of microtubules, a cylinder consisting of laterally associated linear protofilaments composed of alpha- and beta-tubulin heterodimers. Microtubules grow by the addition of GTP-tubulin dimers to the microtubule end, where a stabilizing cap forms. Below the cap, tubulin dimers are in GDP-bound state, owing to GTPase activity of alpha-tubulin. This is Tubulin beta-5 chain (TUBB5) from Arabidopsis thaliana (Mouse-ear cress).